A 318-amino-acid chain; its full sequence is 1-aminocyclopropane-1-carboxylate oxidase (318 aa).

In terms of domain architecture, Fe2OG dioxygenase spans 153–253; sequence PNFGTKVANY…RMSIASFYNP (101 aa). 3 residues coordinate Fe cation: H177, D179, and H234.

This sequence belongs to the iron/ascorbate-dependent oxidoreductase family. It depends on Fe cation as a cofactor.

It catalyses the reaction 1-aminocyclopropane-1-carboxylate + L-ascorbate + O2 = ethene + L-dehydroascorbate + hydrogen cyanide + CO2 + 2 H2O. It participates in alkene biosynthesis; ethylene biosynthesis via S-adenosyl-L-methionine; ethylene from S-adenosyl-L-methionine: step 2/2. The sequence is that of 1-aminocyclopropane-1-carboxylate oxidase (DK-ACO1) from Diospyros kaki (Kaki persimmon).